The primary structure comprises 551 residues: Sodium-dependent high-affinity dicarboxylate transporter 2 (551 aa).

10 helical membrane passes run leucine 9–glycine 29, cysteine 34–valine 54, serine 82–histidine 102, valine 119–alanine 139, phenylalanine 194–isoleucine 214, tryptophan 243–valine 263, valine 347–isoleucine 367, isoleucine 417–methionine 437, isoleucine 449–alanine 469, and valine 497–isoleucine 517.

Belongs to the SLC13A/DASS transporter (TC 2.A.47) family. NADC subfamily.

The protein resides in the membrane. Its function is as follows. High-affinity sodium-dicarboxylate cotransporter that accepts a range of tricarboxylic acid-cycle intermediates with 4-5 carbon atoms. There is no interaction with monocarboxylates. The chain is Sodium-dependent high-affinity dicarboxylate transporter 2 (nac-2) from Caenorhabditis elegans.